Here is a 523-residue protein sequence, read N- to C-terminus: WD repeat-containing protein WDS homolog (523 aa).

Positions 16–48 (KKHEFIRILVQCLYSLGFKNSASCLEFESKILY) constitute a LisH domain. The CTLH domain occupies 49-107 (KTADSEFLEKQVLSGNWDSCVQVLDRIFDNSMDDTRNTALYLVFKQCLLEYLKRGDVSL). 7 WD repeats span residues 222–261 (AHKN…KVEL), 267–306 (SHQN…LRHT), 310–353 (NNTG…KAWR), 355–394 (TRIP…ERVI), 395–434 (SEEQ…KQPL), 438–480 (GHRQ…PLEV), and 483–523 (GHSM…KPLN).

In terms of assembly, interacts with RANBPM.

The protein localises to the cytoplasm. This chain is WD repeat-containing protein WDS homolog, found in Arabidopsis thaliana (Mouse-ear cress).